An 835-amino-acid polypeptide reads, in one-letter code: Ubiquitin carboxyl-terminal hydrolase 26 (835 aa).

The interval 102-128 (SQGSIRPARSDERCGEPSTSAQELNGS) is disordered. Residues 118–128 (PSTSAQELNGS) show a composition bias toward polar residues. The 531-residue stretch at 286–816 (QGLPNVGNTC…TGYVFFYMHN (531 aa)) folds into the USP domain. The Nucleophile role is filled by Cys-295. The interval 597–747 (NRESEAQSGK…TRKVDPTKLN (151 aa)) is disordered. Basic and acidic residues-rich tracts occupy residues 634–652 (LTKE…RPSD) and 669–679 (KCNEGRSDKQI). Positions 683–708 (ALTQSRPKPISQEQTENLGKTTLSHT) are enriched in polar residues. Residues 709–725 (QDSSQSSQSSSDSSKSS) show a composition bias toward low complexity. Residues 726 to 747 (RCSDDLDKKAKPTRKVDPTKLN) show a composition bias toward basic and acidic residues. His-771 serves as the catalytic Proton acceptor.

Belongs to the peptidase C19 family. In terms of assembly, interacts with RING1.

Its subcellular location is the nucleus. The protein localises to the cytoplasm. It is found in the cytoskeleton. It localises to the flagellum axoneme. The enzyme catalyses Thiol-dependent hydrolysis of ester, thioester, amide, peptide and isopeptide bonds formed by the C-terminal Gly of ubiquitin (a 76-residue protein attached to proteins as an intracellular targeting signal).. Functionally, deubiquitinase regulating several biological processes through the deubiquitination of components of these processes. Involved in somatic cell reprogramming through the 'Lys-48'-linked deubiquitination and stabilization of CBX4 and CBX6, two components of the polycomb-repressive complex 1 (PRC1). Also deubiquitinates and probably stabilizes the androgen receptor (AR), regulating the androgen receptor signaling pathway. May play a role in spermatogenesis. The polypeptide is Ubiquitin carboxyl-terminal hydrolase 26 (Mus musculus (Mouse)).